The sequence spans 279 residues: Dermonecrotic toxin LspiSicTox-betaIE3i (279 aa).

His-5 is an active-site residue. Positions 25 and 27 each coordinate Mg(2+). His-41 acts as the Nucleophile in catalysis. 2 cysteine pairs are disulfide-bonded: Cys-45–Cys-51 and Cys-47–Cys-190. Position 85 (Asp-85) interacts with Mg(2+).

This sequence belongs to the arthropod phospholipase D family. Class II subfamily. The cofactor is Mg(2+). As to expression, expressed by the venom gland.

Its subcellular location is the secreted. It carries out the reaction an N-(acyl)-sphingosylphosphocholine = an N-(acyl)-sphingosyl-1,3-cyclic phosphate + choline. It catalyses the reaction an N-(acyl)-sphingosylphosphoethanolamine = an N-(acyl)-sphingosyl-1,3-cyclic phosphate + ethanolamine. The enzyme catalyses a 1-acyl-sn-glycero-3-phosphocholine = a 1-acyl-sn-glycero-2,3-cyclic phosphate + choline. The catalysed reaction is a 1-acyl-sn-glycero-3-phosphoethanolamine = a 1-acyl-sn-glycero-2,3-cyclic phosphate + ethanolamine. Dermonecrotic toxins cleave the phosphodiester linkage between the phosphate and headgroup of certain phospholipids (sphingolipid and lysolipid substrates), forming an alcohol (often choline) and a cyclic phosphate. This toxin acts on sphingomyelin (SM). It may also act on ceramide phosphoethanolamine (CPE), lysophosphatidylcholine (LPC) and lysophosphatidylethanolamine (LPE), but not on lysophosphatidylserine (LPS), and lysophosphatidylglycerol (LPG). It acts by transphosphatidylation, releasing exclusively cyclic phosphate products as second products. Induces dermonecrosis, hemolysis, increased vascular permeability, edema, inflammatory response, and platelet aggregation. The sequence is that of Dermonecrotic toxin LspiSicTox-betaIE3i from Loxosceles spinulosa (Recluse spider).